The primary structure comprises 485 residues: METNESTEGSRSRSRSLDIQPSSEGLGPTSEPFPSSDDSPRSALAAATAAAAAAASAAAATAAFTTAKAAALSTKTPAPCSEFMEPSSDPSLLGEPCAGPGFTHNIAHGSLGFEPVYVSCIAQDTCTTTDHSSNPGPVPGSSSGPVLGSSSGAGHGSGSGSGPGCGSVPGSGSGPGPGSGPGSGPGHGSGSHPGPASGPGPDTGPDSELSPCIPPGFRNLVADRVPNYTSWSQHCPWEPQKQPPWEFLQVLEPGARGLWKPPDIKGKLMVCYETLPRGQCLLYNWEEERATNHLDQVPSMQDGSESFFFRHGHRGLLTMQLKSPMPSSTTQKDSYQPPGNVYWPLRGKREAMLEMLLQHQICKEVQAEQEPTRKLFEVESVTHHDYRMELAQAGTPAPTKPHDYRQEQPETFWIQRAPQLPGVSNIRTLDTPFRKNCSFSTPVPLSLGKLLPYEPENYPYQLGEISSLPCPGGRLGGGGGRMTPF.

3 disordered regions span residues 1–42 (METN…SPRS), 75–98 (KTPA…EPCA), and 127–215 (TTTD…CIPP). The segment covering 132 to 150 (SSNPGPVPGSSSGPVLGSS) has biased composition (low complexity). Gly residues predominate over residues 151 to 191 (SGAGHGSGSGSGPGCGSVPGSGSGPGPGSGPGSGPGHGSGS). 2 mn regions span residues 327-340 (SSTT…PPGN) and 379-393 (ESVT…LAQA).

The protein belongs to the SPAG8 family. In terms of assembly, microtubule inner protein component of sperm flagellar doublet microtubules. Interacts with FHL5 (via second LIM domain). Interacts with RANBP9. In terms of tissue distribution, expressed in testis (germ cells), but not in liver, kidney, prostate and small intestine. Expressed in airway epithelial cells.

It localises to the cytoplasm. It is found in the nucleus. The protein localises to the cytoplasmic vesicle. The protein resides in the secretory vesicle. Its subcellular location is the acrosome. It localises to the cytoskeleton. It is found in the microtubule organizing center. The protein localises to the spindle. The protein resides in the cilium axoneme. Its subcellular location is the flagellum axoneme. Its function is as follows. Microtubule inner protein (MIP) part of the dynein-decorated doublet microtubules (DMTs) in cilia axoneme, which is required for motile cilia beating. Plays a role in spermatogenesis by enhancing the binding of CREM isoform tau to its coactivator FHL5 and increasing the FHL5-regulated transcriptional activation of CREM isoform tau. Involved in the acrosome reaction and in binding of sperm to the zona pellucida. Plays a role in regulation of the cell cycle by controlling progression through the G2/M phase, possibly by delaying the activation of CDK1 which is required for entry into mitosis. May play a role in fertility and microtubule formation through interaction with RANBP9. This Homo sapiens (Human) protein is Sperm-associated antigen 8.